Consider the following 1098-residue polypeptide: Contactin-5 (1098 aa).

An N-terminal signal peptide occupies residues 1–23 (MASCWRLILFLSVTRWLSDYSEA). 6 Ig-like C2-type domains span residues 98–189 (PVFV…ATLQ), 195–281 (NFSG…RVLS), 299–384 (PKIE…GQLQ), 389–473 (PHWV…AELK), 479–568 (PSFE…LSVK), and 570–659 (PTRI…DSVS). Cysteines 122 and 172 form a disulfide. Asn-137 and Asn-195 each carry an N-linked (GlcNAc...) asparagine glycan. 2 disulfide bridges follow: Cys-216/Cys-268 and Cys-321/Cys-368. 3 N-linked (GlcNAc...) asparagine glycosylation sites follow: Asn-396, Asn-448, and Asn-539. Intrachain disulfides connect Cys-410–Cys-457, Cys-502–Cys-550, and Cys-592–Cys-649. 4 Fibronectin type-III domains span residues 672 to 770 (PPGV…TNEA), 775 to 872 (APSN…SAEG), 877 to 971 (APTD…TKRH), and 976 to 1066 (PPGN…SYSG). 3 N-linked (GlcNAc...) asparagine glycosylation sites follow: Asn-778, Asn-815, and Asn-930. The interval 956–982 (GYGPPSREASTTTKRHPPREPPGNLRW) is disordered. Residue Asn-1001 is glycosylated (N-linked (GlcNAc...) asparagine). Ser-1071 carries the GPI-anchor amidated serine lipid modification. Residues 1072-1098 (AQSTLHSLSKWSSVTLLLALMLPSSSW) constitute a propeptide, removed in mature form.

It belongs to the immunoglobulin superfamily. Contactin family. As to quaternary structure, interacts with PTPRG. As to expression, expressed in the nervous system. Preferentially expressed in the central auditory pathways.

The protein resides in the cell membrane. Its function is as follows. Contactins mediate cell surface interactions during nervous system development. Has some neurite outgrowth-promoting activity in the cerebral cortical neurons but not in hippocampal neurons. Involved in neuronal activity in the auditory system. This chain is Contactin-5 (Cntn5), found in Mus musculus (Mouse).